A 365-amino-acid polypeptide reads, in one-letter code: tRNA-specific 2-thiouridylase MnmA (365 aa).

ATP-binding positions include 12 to 19 (AMSGGVDS) and methionine 38. The active-site Nucleophile is cysteine 108. A disulfide bridge links cysteine 108 with cysteine 206. Glycine 132 provides a ligand contact to ATP. The tract at residues 156–158 (KDQ) is interaction with tRNA. The Cysteine persulfide intermediate role is filled by cysteine 206. Residues 312-313 (RY) form an interaction with tRNA region.

The protein belongs to the MnmA/TRMU family.

It localises to the cytoplasm. It carries out the reaction S-sulfanyl-L-cysteinyl-[protein] + uridine(34) in tRNA + AH2 + ATP = 2-thiouridine(34) in tRNA + L-cysteinyl-[protein] + A + AMP + diphosphate + H(+). Functionally, catalyzes the 2-thiolation of uridine at the wobble position (U34) of tRNA, leading to the formation of s(2)U34. This chain is tRNA-specific 2-thiouridylase MnmA, found in Carboxydothermus hydrogenoformans (strain ATCC BAA-161 / DSM 6008 / Z-2901).